The chain runs to 195 residues: MRQADITRKTAETAISVKVDLDGTGRYDIRTGVGFFDHMMDQLARHSLIDITLRCEGDLHIDDHHTVEDCGIALGQALTQALGDKRGIRRYGSFHLAMDDALVRCALDLSGRPYLVCNLPFPAAKIGSFDTELVREFFQALSTHGGITLHLDLIHGLNGHHIAEAAFKAVARSLREAVEPDPRAASAIPSTKGML.

This sequence belongs to the imidazoleglycerol-phosphate dehydratase family.

It localises to the cytoplasm. The enzyme catalyses D-erythro-1-(imidazol-4-yl)glycerol 3-phosphate = 3-(imidazol-4-yl)-2-oxopropyl phosphate + H2O. It functions in the pathway amino-acid biosynthesis; L-histidine biosynthesis; L-histidine from 5-phospho-alpha-D-ribose 1-diphosphate: step 6/9. This chain is Imidazoleglycerol-phosphate dehydratase, found in Cereibacter sphaeroides (strain ATCC 17025 / ATH 2.4.3) (Rhodobacter sphaeroides).